A 112-amino-acid chain; its full sequence is Putative pterin-4-alpha-carbinolamine dehydratase (112 aa).

It belongs to the pterin-4-alpha-carbinolamine dehydratase family.

The enzyme catalyses (4aS,6R)-4a-hydroxy-L-erythro-5,6,7,8-tetrahydrobiopterin = (6R)-L-erythro-6,7-dihydrobiopterin + H2O. This is Putative pterin-4-alpha-carbinolamine dehydratase from Shewanella sp. (strain ANA-3).